A 216-amino-acid polypeptide reads, in one-letter code: N-acetyltransferase 9-like protein (216 aa).

The N-acetyltransferase domain maps to 68–215 (VLLNENDEAK…DHVELELMRT (148 aa)).

Belongs to the acetyltransferase family. GNAT subfamily.

It localises to the cytoplasm. The protein resides in the nucleus. The sequence is that of N-acetyltransferase 9-like protein from Schizosaccharomyces pombe (strain 972 / ATCC 24843) (Fission yeast).